A 171-amino-acid chain; its full sequence is Non-specific lipid transfer protein GPI-anchored 19 (171 aa).

An N-terminal signal peptide occupies residues 1–18 (MILAILALVIATFLYGGA). Intrachain disulfides connect C25–C66, C35–C50, C51–C93, and C64–C103. N72 and N82 each carry an N-linked (GlcNAc...) asparagine glycan. Positions 113–149 (LPANTPVGSPRSAPSPSGTTSPANTPSGSKKFPLSNE) are disordered. Positions 118–141 (PVGSPRSAPSPSGTTSPANTPSGS) are enriched in low complexity. The GPI-anchor amidated serine moiety is linked to residue S147. N148 carries an N-linked (GlcNAc...) asparagine glycan. Residues 148–171 (NESSSKSNVIILSFVSIALVLAII) constitute a propeptide, removed in mature form.

It belongs to the plant LTP family.

It is found in the cell membrane. In terms of biological role, probable lipid transfer protein. The polypeptide is Non-specific lipid transfer protein GPI-anchored 19 (Arabidopsis thaliana (Mouse-ear cress)).